The sequence spans 212 residues: 2,3-bisphosphoglycerate-dependent phosphoglycerate mutase (212 aa).

Substrate is bound by residues 9 to 16, 22 to 23, R61, 88 to 91, K99, 115 to 116, and 159 to 160; these read RHGQSEWN, TG, ERDY, RR, and GN. H10 functions as the Tele-phosphohistidine intermediate in the catalytic mechanism. Residue E88 is the Proton donor/acceptor of the active site.

This sequence belongs to the phosphoglycerate mutase family. BPG-dependent PGAM subfamily. In terms of assembly, homodimer.

It catalyses the reaction (2R)-2-phosphoglycerate = (2R)-3-phosphoglycerate. It participates in carbohydrate degradation; glycolysis; pyruvate from D-glyceraldehyde 3-phosphate: step 3/5. Its function is as follows. Catalyzes the interconversion of 2-phosphoglycerate and 3-phosphoglycerate. The protein is 2,3-bisphosphoglycerate-dependent phosphoglycerate mutase of Methylorubrum extorquens (strain CM4 / NCIMB 13688) (Methylobacterium extorquens).